The chain runs to 827 residues: Glycerol-3-phosphate acyltransferase (827 aa).

The HXXXXD motif motif lies at 325-330 (CHRSHM).

It belongs to the GPAT/DAPAT family.

Its subcellular location is the cell inner membrane. The enzyme catalyses sn-glycerol 3-phosphate + an acyl-CoA = a 1-acyl-sn-glycero-3-phosphate + CoA. Its pathway is phospholipid metabolism; CDP-diacylglycerol biosynthesis; CDP-diacylglycerol from sn-glycerol 3-phosphate: step 1/3. The chain is Glycerol-3-phosphate acyltransferase from Shigella boydii serotype 4 (strain Sb227).